The following is a 400-amino-acid chain: MTHEAVDTTPLHGTGWSFRSAMYDPKYRSIFYQILTIVILVGFVWWVAHNTAVNLARSNTASGFGFLRGRAGFEIGQSLITFSSDSTYARALLVGILNTLLVAVTGIFTATIIGFLIGIGRLSRNWLIAKLCTVYVEVFRNIPPLLVIFFWYLGVLSVLPQPRESVGLPFSMYLNNRGLAFPKPIFDTGMIAVGIALVIAIVASIIIARWAHKRQAATGQPFHTVWTAIALIVGLPLLVFVVSGFPLTFDVPVAGKFNLTGGSVVGPEFMSLFLALSFYTASFIAEIVRGGIRGVPKGQSEAAGALGLHPSSVTRLVVVPQALRIIIPPLTSQYLNLTKNSSLAIAIGFSDLVAVGGTILNQSGQAIEIVCIWGIVYLSLSILTSLFMNWFNAKMALVER.

The next 8 membrane-spanning stretches (helical) occupy residues 29–49 (SIFYQILTIVILVGFVWWVAH), 100–120 (LLVAVTGIFTATIIGFLIGIG), 142–162 (IPPLLVIFFWYLGVLSVLPQP), 188–208 (TGMIAVGIALVIAIVASIIIA), 225–245 (VWTAIALIVGLPLLVFVVSGF), 264–284 (VVGPEFMSLFLALSFYTASFI), 340–360 (NSSLAIAIGFSDLVAVGGTIL), and 367–387 (IEIVCIWGIVYLSLSILTSLF). In terms of domain architecture, ABC transmembrane type-1 spans 96–388 (ILNTLLVAVT…SLSILTSLFM (293 aa)).

The protein belongs to the binding-protein-dependent transport system permease family. HisMQ subfamily.

It is found in the cell inner membrane. Functionally, part of a binding-protein-dependent transport system for L-amino acids, affects the uptake as well as efflux of these amino acids. Probably responsible for the translocation of the substrate across the membrane. The protein is General L-amino acid transport system permease protein AapQ (aapQ) of Rhizobium johnstonii (strain DSM 114642 / LMG 32736 / 3841) (Rhizobium leguminosarum bv. viciae).